The sequence spans 689 residues: DNA ligase (689 aa).

NAD(+)-binding positions include 32–36 (DAEYD), 81–82 (SL), and Glu-113. Lys-115 acts as the N6-AMP-lysine intermediate in catalysis. Positions 136, 176, 306, and 330 each coordinate NAD(+). Zn(2+) contacts are provided by Cys-424, Cys-427, Cys-442, and Cys-448. The BRCT domain maps to 606-689 (AEELPLAEQI…ALLAEHGITI (84 aa)).

This sequence belongs to the NAD-dependent DNA ligase family. LigA subfamily. It depends on Mg(2+) as a cofactor. Mn(2+) serves as cofactor.

The catalysed reaction is NAD(+) + (deoxyribonucleotide)n-3'-hydroxyl + 5'-phospho-(deoxyribonucleotide)m = (deoxyribonucleotide)n+m + AMP + beta-nicotinamide D-nucleotide.. Its function is as follows. DNA ligase that catalyzes the formation of phosphodiester linkages between 5'-phosphoryl and 3'-hydroxyl groups in double-stranded DNA using NAD as a coenzyme and as the energy source for the reaction. It is essential for DNA replication and repair of damaged DNA. This chain is DNA ligase, found in Colwellia psychrerythraea (strain 34H / ATCC BAA-681) (Vibrio psychroerythus).